Consider the following 389-residue polypeptide: tRNA-specific 2-thiouridylase MnmA (389 aa).

ATP is bound by residues 35–42 and Met-61; that span reads GMSGGVDS. The interaction with target base in tRNA stretch occupies residues 121–123; the sequence is NPD. Cys-126 serves as the catalytic Nucleophile. Cys-126 and Cys-223 are oxidised to a cystine. Residue Gly-151 coordinates ATP. The segment at 173 to 175 is interaction with tRNA; that stretch reads KDQ. The Cysteine persulfide intermediate role is filled by Cys-223. Positions 335–336 are interaction with tRNA; it reads RY.

It belongs to the MnmA/TRMU family.

The protein resides in the cytoplasm. The catalysed reaction is S-sulfanyl-L-cysteinyl-[protein] + uridine(34) in tRNA + AH2 + ATP = 2-thiouridine(34) in tRNA + L-cysteinyl-[protein] + A + AMP + diphosphate + H(+). Catalyzes the 2-thiolation of uridine at the wobble position (U34) of tRNA, leading to the formation of s(2)U34. In Mannheimia succiniciproducens (strain KCTC 0769BP / MBEL55E), this protein is tRNA-specific 2-thiouridylase MnmA.